A 139-amino-acid polypeptide reads, in one-letter code: Diuretic hormone 41 (139 aa).

An N-terminal signal peptide occupies residues 1-20 (MMWWALWCAVVVAAGSGVAA). Residues 21–79 (APAPDSLSPLDMVQMDSSAPDDETLYAMSPMAARYSAGAPWLYLLADMPRDSQTGSGRV) constitute a propeptide that is removed on maturation. The residue at position 122 (Ile122) is an Isoleucine amide.

This sequence belongs to the sauvagine/corticotropin-releasing factor/urotensin I family. In terms of tissue distribution, expressed in corpora cardiaca (CC), corpora allata (CA), antennal lobe (AL) and gnathal ganglion (GNG) (at protein level). Expression in CC and CA detected in all animals, in GNG in most animals, expression in AL detected in few animals (at protein level).

The protein resides in the secreted. In terms of biological role, regulation of fluid secretion. The chain is Diuretic hormone 41 from Agrotis ipsilon (Black cutworm moth).